Reading from the N-terminus, the 114-residue chain is Amphinase-3 (114 aa).

Histidine 15 serves as the catalytic Proton acceptor. N-linked (GlcNAc...) asparagine glycosylation is present at asparagine 25. Disulfide bonds link cysteine 26/cysteine 79, cysteine 41/cysteine 85, cysteine 59/cysteine 100, and cysteine 97/cysteine 114. 42-46 contributes to the substrate binding site; the sequence is KPINT. Asparagine 67 and asparagine 91 each carry an N-linked (GlcNAc...) asparagine glycan. Catalysis depends on histidine 107, which acts as the Proton donor.

This sequence belongs to the pancreatic ribonuclease family. As to quaternary structure, monomer. Post-translationally, there are at least five different forms arising from glycan heterogeneity.

The protein localises to the secreted. Its function is as follows. Endonuclease, hydrolyzes highly polymerized RNA, poly(U) and poly(C), and the dinucleotides CpA and UpA. More active towards rCA than rUA or rUG. Has cytotoxic activity against cultured human submaxillary gland carcinoma cells. The chain is Amphinase-3 from Lithobates pipiens (Northern leopard frog).